We begin with the raw amino-acid sequence, 589 residues long: Intermediate filament protein ifb-1 (589 aa).

The tract at residues 1–42 (MSSHKESSEYEMQYRSTIQPRTAVRSQSRQSGNYVSGGNGAG) is disordered. Residues 8–84 (SEYEMQYRST…LEATDKEKKT (77 aa)) form a head region. Polar residues predominate over residues 14–30 (YRSTIQPRTAVRSQSRQ). The IF rod domain occupies 81–433 (EKKTLQGLND…KMLEGEETRV (353 aa)). The segment at 85 to 116 (LQGLNDRLGNYIDRVKKLEEQNRKLVADLDEL) is coil 1A. The tract at residues 117-130 (RGKWGKDTSEIKIK) is linker 1. The tract at residues 131–268 (YSESLSTARK…RVHEQEVKEL (138 aa)) is coil 1B. The tract at residues 269 to 285 (QALLAQAPADTREFFKN) is linker 12. The interval 286–433 (ELALAIRDIK…KMLEGEETRV (148 aa)) is coil 2. The interval 434 to 588 (GLTQMVEQAV…THTQKTIQSG (155 aa)) is tail. A disordered region spans residues 444 to 470 (KTHSLQQQENTDSTRSVRGEVSTKTTF). In terms of domain architecture, LTD spans 466–584 (TKTTFQRSAK…EERATHTQKT (119 aa)).

Belongs to the intermediate filament family. Forms some heteromeric filaments with ifa-1, ifa-2, ifa-3 and probably ifa-4. In terms of tissue distribution, expressed in epidermal cells. Expressed in amphid sensory neurons, the excretory cells, the vulva, the uterus, the rectum and some neurons of the tail. Isoform a and isoform b display a similar pattern of expression. Isoform a is predominant in pharyngeal tonofilaments.

Its subcellular location is the cytoplasm. Functionally, cytoplasmic intermediate filaments provide mechanical strength to cells. Essential protein, involved in attachment structures in epidermal cells that connect muscles to the external cuticle. Required in morphogenesis and epidermal integrity. Probable component of embryonic epidermal attachment structures. Functions in larval muscle attachment independently of ifa-2. This chain is Intermediate filament protein ifb-1 (ifb-1), found in Caenorhabditis elegans.